We begin with the raw amino-acid sequence, 237 residues long: 1-(5-phosphoribosyl)-5-[(5-phosphoribosylamino)methylideneamino] imidazole-4-carboxamide isomerase (237 aa).

The active-site Proton acceptor is the D8. The Proton donor role is filled by D129.

It belongs to the HisA/HisF family.

The protein resides in the cytoplasm. It catalyses the reaction 1-(5-phospho-beta-D-ribosyl)-5-[(5-phospho-beta-D-ribosylamino)methylideneamino]imidazole-4-carboxamide = 5-[(5-phospho-1-deoxy-D-ribulos-1-ylimino)methylamino]-1-(5-phospho-beta-D-ribosyl)imidazole-4-carboxamide. The protein operates within amino-acid biosynthesis; L-histidine biosynthesis; L-histidine from 5-phospho-alpha-D-ribose 1-diphosphate: step 4/9. The sequence is that of 1-(5-phosphoribosyl)-5-[(5-phosphoribosylamino)methylideneamino] imidazole-4-carboxamide isomerase from Methanosphaera stadtmanae (strain ATCC 43021 / DSM 3091 / JCM 11832 / MCB-3).